Reading from the N-terminus, the 847-residue chain is Glucans biosynthesis glucosyltransferase H (847 aa).

Residues 1 to 138 (MNKTTEYIDA…KWRTVGTIRR (138 aa)) lie on the Cytoplasmic side of the membrane. A helical membrane pass occupies residues 139-156 (YILLILTLAQTVVATWYM). At 157–193 (KTILPYQGWALINPMDMVGQDIWVSFMQLLPYMLQTG) the chain is on the periplasmic side. The chain crosses the membrane as a helical span at residues 194 to 216 (ILILFAVLFCWVSAGFWTALMGF). The Cytoplasmic segment spans residues 217 to 511 (LQLLIGRDKY…LVKGMHPVHR (295 aa)). The helical transmembrane segment at 512 to 534 (AVFLTGVMSYLSAPLWFMFLALS) threads the bilayer. At 535-567 (TALQVVHALTEPQYFLQPRQLFPVWPQWRPELA) the chain is on the periplasmic side. The helical transmembrane segment at 568–590 (IALFASTMVLLFLPKLLSIMLIW) threads the bilayer. Residues 591–602 (CKGTKEYGGFWR) lie on the Cytoplasmic side of the membrane. Residues 603 to 625 (VTLSLLLEVLFSVLLAPVRMLFH) traverse the membrane as a helical segment. At 626-679 (TVFVVSAFLGWEVVWNSPQRDDDSTPWGEAFMRHGSQLLLGLVWAVGMAWLDLR) the chain is on the periplasmic side. The helical transmembrane segment at 680 to 702 (FLFWLAPIVFSLILSPFVSVISS) threads the bilayer. Over 703–847 (RSTVGLRTKR…ALQGRTSSAR (145 aa)) the chain is Cytoplasmic.

Belongs to the glycosyltransferase 2 family. OpgH subfamily.

It localises to the cell inner membrane. It functions in the pathway glycan metabolism; osmoregulated periplasmic glucan (OPG) biosynthesis. Functionally, involved in the biosynthesis of osmoregulated periplasmic glucans (OPGs). This chain is Glucans biosynthesis glucosyltransferase H, found in Salmonella typhimurium (strain LT2 / SGSC1412 / ATCC 700720).